The sequence spans 199 residues: Rho-related protein racG (199 aa).

Positions 13, 15, 16, 17, 18, 32, and 35 each coordinate GTP. Mg(2+) is bound at residue threonine 17. Short sequence motifs (switch) lie at residues 26 to 37 (NAFPNEYIPTVF) and 57 to 75 (DTAGQEDYDRLRPLSYPST). Position 35 (threonine 35) interacts with Mg(2+). GTP contacts are provided by lysine 116, aspartate 118, and alanine 159. Position 196 is a cysteine methyl ester (cysteine 196). Cysteine 196 carries the S-geranylgeranyl cysteine lipid modification. Residues 197 to 199 (SLF) constitute a propeptide, removed in mature form.

This sequence belongs to the small GTPase superfamily. Rho family. Mg(2+) is required as a cofactor.

The protein resides in the cell membrane. The protein localises to the cytoplasm. It is found in the cytoskeleton. It carries out the reaction GTP + H2O = GDP + phosphate + H(+). Its activity is regulated as follows. Regulated by guanine nucleotide exchange factors (GEFs) which promote the exchange of bound GDP for free GTP, GTPase activating proteins (GAPs) which increase the GTP hydrolysis activity, and GDP dissociation inhibitors which inhibit the dissociation of the nucleotide from the GTPase. Functionally, small GTPase which cycles between active GTP-bound and inactive GDP-bound states. Involved in actin cytoskeleton remodeling during capping of surface receptors and uroid formation. In Entamoeba histolytica (strain ATCC 30459 / HM-1:IMSS / ABRM), this protein is Rho-related protein racG.